A 209-amino-acid polypeptide reads, in one-letter code: Uracil phosphoribosyltransferase (209 aa).

5-phospho-alpha-D-ribose 1-diphosphate contacts are provided by residues Arg79, Arg104, and 131-139 (DPMLATGGT). Uracil contacts are provided by residues Ile194 and 199-201 (GDA). 5-phospho-alpha-D-ribose 1-diphosphate is bound at residue Asp200.

Belongs to the UPRTase family. The cofactor is Mg(2+).

The catalysed reaction is UMP + diphosphate = 5-phospho-alpha-D-ribose 1-diphosphate + uracil. The protein operates within pyrimidine metabolism; UMP biosynthesis via salvage pathway; UMP from uracil: step 1/1. Allosterically activated by GTP. In terms of biological role, catalyzes the conversion of uracil and 5-phospho-alpha-D-ribose 1-diphosphate (PRPP) to UMP and diphosphate. The protein is Uracil phosphoribosyltransferase of Pseudoalteromonas translucida (strain TAC 125).